The following is a 237-amino-acid chain: MALKTLPIEARPRERLLARGPSSLSDTELLAILLRTGIVGKGVMQMAQELLSPALPDPATGALRGGFGGIGGLLQADADALKRIKGLGPAKRTSLVAVLELARRMLAQTLPKRDLFHSPRAVRDYLQLHLGGKPHEVFSVLFLDSQNGLIAMEEMFRGTLSQASVYPREVVVRALHHHAAAVVLVHNHPSGQVQPSRADETLTRSLTDALRLVDVRVLDHIIVAPGSSLSMAEEGLI.

Residues 115 to 237 (LFHSPRAVRD…SLSMAEEGLI (123 aa)) form the MPN domain. Zn(2+) is bound by residues His186, His188, and Asp199. The JAMM motif signature appears at 186 to 199 (HNHPSGQVQPSRAD).

It belongs to the UPF0758 family.

The polypeptide is UPF0758 protein Aave_3773 (Paracidovorax citrulli (strain AAC00-1) (Acidovorax citrulli)).